We begin with the raw amino-acid sequence, 351 residues long: Tetraacyldisaccharide 4'-kinase (351 aa).

61 to 68 (TAGGTGKT) contacts ATP.

Belongs to the LpxK family.

It catalyses the reaction a lipid A disaccharide + ATP = a lipid IVA + ADP + H(+). The protein operates within glycolipid biosynthesis; lipid IV(A) biosynthesis; lipid IV(A) from (3R)-3-hydroxytetradecanoyl-[acyl-carrier-protein] and UDP-N-acetyl-alpha-D-glucosamine: step 6/6. Its function is as follows. Transfers the gamma-phosphate of ATP to the 4'-position of a tetraacyldisaccharide 1-phosphate intermediate (termed DS-1-P) to form tetraacyldisaccharide 1,4'-bis-phosphate (lipid IVA). This chain is Tetraacyldisaccharide 4'-kinase, found in Xanthomonas campestris pv. campestris (strain 8004).